Here is a 578-residue protein sequence, read N- to C-terminus: Proline--tRNA ligase (578 aa).

It belongs to the class-II aminoacyl-tRNA synthetase family. ProS type 1 subfamily. As to quaternary structure, homodimer.

It is found in the cytoplasm. It carries out the reaction tRNA(Pro) + L-proline + ATP = L-prolyl-tRNA(Pro) + AMP + diphosphate. Catalyzes the attachment of proline to tRNA(Pro) in a two-step reaction: proline is first activated by ATP to form Pro-AMP and then transferred to the acceptor end of tRNA(Pro). As ProRS can inadvertently accommodate and process non-cognate amino acids such as alanine and cysteine, to avoid such errors it has two additional distinct editing activities against alanine. One activity is designated as 'pretransfer' editing and involves the tRNA(Pro)-independent hydrolysis of activated Ala-AMP. The other activity is designated 'posttransfer' editing and involves deacylation of mischarged Ala-tRNA(Pro). The misacylated Cys-tRNA(Pro) is not edited by ProRS. The chain is Proline--tRNA ligase from Burkholderia ambifaria (strain MC40-6).